Consider the following 97-residue polypeptide: Co-chaperonin GroES (97 aa).

This sequence belongs to the GroES chaperonin family. As to quaternary structure, heptamer of 7 subunits arranged in a ring. Interacts with the chaperonin GroEL.

The protein localises to the cytoplasm. In terms of biological role, together with the chaperonin GroEL, plays an essential role in assisting protein folding. The GroEL-GroES system forms a nano-cage that allows encapsulation of the non-native substrate proteins and provides a physical environment optimized to promote and accelerate protein folding. GroES binds to the apical surface of the GroEL ring, thereby capping the opening of the GroEL channel. The polypeptide is Co-chaperonin GroES (Erwinia tasmaniensis (strain DSM 17950 / CFBP 7177 / CIP 109463 / NCPPB 4357 / Et1/99)).